A 428-amino-acid chain; its full sequence is Gamma-glutamyl phosphate reductase (428 aa).

Belongs to the gamma-glutamyl phosphate reductase family.

It is found in the cytoplasm. The enzyme catalyses L-glutamate 5-semialdehyde + phosphate + NADP(+) = L-glutamyl 5-phosphate + NADPH + H(+). It participates in amino-acid biosynthesis; L-proline biosynthesis; L-glutamate 5-semialdehyde from L-glutamate: step 2/2. Catalyzes the NADPH-dependent reduction of L-glutamate 5-phosphate into L-glutamate 5-semialdehyde and phosphate. The product spontaneously undergoes cyclization to form 1-pyrroline-5-carboxylate. This chain is Gamma-glutamyl phosphate reductase, found in Hyphomonas neptunium (strain ATCC 15444).